We begin with the raw amino-acid sequence, 107 residues long: Endonuclease ALBA3 (107 aa).

Lys-23 and Lys-32 each carry N6-acetyllysine.

It belongs to the histone-like Alba family. In terms of assembly, homodimer. Interacts (acetylated and unacetylated) with Sir2A. It depends on a divalent metal cation as a cofactor. In terms of processing, acetylated. Exists in both acetylated and unacetylated forms but predominantly in an acetylated form. Deacetylated by Sir2A.

It is found in the nucleus. The protein resides in the chromosome. Its subcellular location is the telomere. It localises to the cytoplasm. Its activity is regulated as follows. Mild acetylation lowers protein interaction with DNA and high acetylation abolishes DNA-binding activity. DNA binding and endonuclease activity is modulated via deacetylation of Lys-23 by Sir2A. Inhibited in the presence of EDTA and EGTA. Its function is as follows. Possesses DNA-binding and endonuclease activities. Binds DNA cooperatively in sequence-independent manner at the DNA minor groove. Exhibits apurinic/apyrimidinic site-driven endonuclease activity. Binds RNA; shows high affinity for poly(A) and a lower affinity for poly(U) templates. In vitro, prevents transcription after DNA binding. Associates with the telomeric region, the subtelomeric TARE6 repeat sequence and the var gene promoters. The protein is Endonuclease ALBA3 of Plasmodium falciparum (isolate 3D7).